The sequence spans 429 residues: Adenylosuccinate synthetase (429 aa).

Residues 12–18 (GDEGKGK) and 40–42 (GHT) contribute to the GTP site. The Proton acceptor role is filled by D13. D13 and G40 together coordinate Mg(2+). IMP contacts are provided by residues 13-16 (DEGK), 38-41 (NAGH), T128, R142, Q223, T238, and R302. H41 serves as the catalytic Proton donor. 298–304 (VNTGRPR) lines the substrate pocket. GTP-binding positions include R304, 330–332 (KLD), and 412–414 (GVG).

The protein belongs to the adenylosuccinate synthetase family. Homodimer. Mg(2+) is required as a cofactor.

The protein localises to the cytoplasm. It carries out the reaction IMP + L-aspartate + GTP = N(6)-(1,2-dicarboxyethyl)-AMP + GDP + phosphate + 2 H(+). It functions in the pathway purine metabolism; AMP biosynthesis via de novo pathway; AMP from IMP: step 1/2. Its function is as follows. Plays an important role in the de novo pathway of purine nucleotide biosynthesis. Catalyzes the first committed step in the biosynthesis of AMP from IMP. This chain is Adenylosuccinate synthetase, found in Paenarthrobacter aurescens (strain TC1).